A 763-amino-acid chain; its full sequence is Polyribonucleotide nucleotidyltransferase (763 aa).

Mg(2+)-binding residues include Asp526 and Asp532. The 60-residue stretch at 592-651 (PRITTIKVPVDKIGEVIGPKGKMINSITEETGAQISIEDDGTVFVGAADGLSAQAAIDKI) folds into the KH domain. Positions 663–732 (GERFLGTVVK…NRGKISLVLV (70 aa)) constitute an S1 motif domain. The interval 739–763 (SAESAGDKGAEKAEGAAADVTPAEA) is disordered. The span at 743–752 (AGDKGAEKAE) shows a compositional bias: basic and acidic residues.

It belongs to the polyribonucleotide nucleotidyltransferase family. Mg(2+) is required as a cofactor.

The protein localises to the cytoplasm. The enzyme catalyses RNA(n+1) + phosphate = RNA(n) + a ribonucleoside 5'-diphosphate. In terms of biological role, involved in mRNA degradation. Catalyzes the phosphorolysis of single-stranded polyribonucleotides processively in the 3'- to 5'-direction. The chain is Polyribonucleotide nucleotidyltransferase from Mycolicibacterium smegmatis (strain ATCC 700084 / mc(2)155) (Mycobacterium smegmatis).